Here is a 179-residue protein sequence, read N- to C-terminus: ATP synthase subunit delta (179 aa).

The protein belongs to the ATPase delta chain family. F-type ATPases have 2 components, F(1) - the catalytic core - and F(0) - the membrane proton channel. F(1) has five subunits: alpha(3), beta(3), gamma(1), delta(1), epsilon(1). F(0) has three main subunits: a(1), b(2) and c(10-14). The alpha and beta chains form an alternating ring which encloses part of the gamma chain. F(1) is attached to F(0) by a central stalk formed by the gamma and epsilon chains, while a peripheral stalk is formed by the delta and b chains.

The protein resides in the cell inner membrane. F(1)F(0) ATP synthase produces ATP from ADP in the presence of a proton or sodium gradient. F-type ATPases consist of two structural domains, F(1) containing the extramembraneous catalytic core and F(0) containing the membrane proton channel, linked together by a central stalk and a peripheral stalk. During catalysis, ATP synthesis in the catalytic domain of F(1) is coupled via a rotary mechanism of the central stalk subunits to proton translocation. Its function is as follows. This protein is part of the stalk that links CF(0) to CF(1). It either transmits conformational changes from CF(0) to CF(1) or is implicated in proton conduction. This Anaeromyxobacter sp. (strain Fw109-5) protein is ATP synthase subunit delta.